The sequence spans 199 residues: NAD(P)H dehydrogenase (quinone) (199 aa).

The 187-residue stretch at 4–190 folds into the Flavodoxin-like domain; the sequence is VLVLYYSTYG…DGARYQGRHV (187 aa). Residues 10–15 and 78–80 each bind FMN; these read STYGHI and TRY. Residue Tyr-12 coordinates NAD(+). Trp-98 lines the substrate pocket. FMN contacts are provided by residues 113–119 and His-134; that span reads SSASQHG.

Belongs to the WrbA family. FMN is required as a cofactor.

It catalyses the reaction a quinone + NADH + H(+) = a quinol + NAD(+). The enzyme catalyses a quinone + NADPH + H(+) = a quinol + NADP(+). This is NAD(P)H dehydrogenase (quinone) from Methylobacterium sp. (strain 4-46).